A 724-amino-acid chain; its full sequence is MSEKLTGRVTVPTDVDMIQETKEIAERWGADALRDCDGTDMPDELKKMPAKIYSTYYTTRKDNAWANANPDEVQQVYLMTEFYTAMSQGELRIPLMKHLYKDQLKPNTIHDIKRWWEVVDRTTGEPLVLDAWEYDENNQEVIILNPDHFHDYTVSFLAFIIWDPVHMYNFITNDWQDVEHQITYDVRQPKTQKYVIEKLKRWMKENPDSDVVRFTTFFHQFTLVFNEFAKEKFVDWFGYSASVSPYILEQFEKEVGYKFRPEYIIDQGYHNNTNRVPSKEFRDFQEFQQREVAKLMKVLVDICHDNDKEAMMFLGDHWIGTEPFGEYFKHVGLDAVVGSVGNGTTLRLISDIPGVKYTEGRFLPYFFPDVFHEGGDPIKEAKVNWVTARRAILRKPVDRIGYGGYLKLALDFPEFIQYIEEVCDEFRLLYDNMGGQSPYSHFKVGVLNSWGKIRSWGTHMVAHAIDYKQTYSYAGVLEALSGMPFDVEFISFEDVIKNPVILNECGVVINVGDAYTGPSGGAYWTNEKVSSAVKAFVAQGGGFIGVGEPSACEHQGRYFTLANVLGVNKEIGFSMSTDKYNWDEHSHFITEDSNESINFGEGMKNIYALDGAQILRKDGQDVQMAVNQFGDGRSVYISGIPYSFENSRMLYRAIFWAAGMEQEMKKWYSSNYNVEVNYYPATKKYCIVNNTYEPQETMIYDGLGREYSMKLKANDILWFTFLED.

Asp316 (proton donor) is an active-site residue.

Belongs to the glycoside hydrolase 112 family.

The catalysed reaction is beta-D-galactosyl-(1-&gt;3)-N-acetyl-D-glucosamine + phosphate = alpha-D-galactose 1-phosphate + N-acetyl-D-glucosamine. Reversibly phosphorolyzes beta-D-galactopyranosyl-(1-&gt;3)-N-acetyl-D-glucosamine to form alpha-D-galactopyranose 1-phosphate and acetyl-D-glucosamine. Active towards galacto-N-biose and lacto-N-biose. Does not phosphorolyze galacto-N-tetraose or lacto-N-tetraose. In the reverse reaction has activity toward N-acetyl-D-glucosamine and N-acetyl-D-galactosamine, but not L-rhamnose, D-glucose or D-galactose. The protein is 1,3-beta-galactosyl-N-acetylhexosamine phosphorylase Cphy3030 of Lachnoclostridium phytofermentans (strain ATCC 700394 / DSM 18823 / ISDg) (Clostridium phytofermentans).